A 160-amino-acid chain; its full sequence is ATP synthase subunit b (160 aa).

The helical transmembrane segment at 12-32 threads the bilayer; that stretch reads ISFVLFVWFCMKYVWYPFISI.

The protein belongs to the ATPase B chain family. As to quaternary structure, F-type ATPases have 2 components, F(1) - the catalytic core - and F(0) - the membrane proton channel. F(1) has five subunits: alpha(3), beta(3), gamma(1), delta(1), epsilon(1). F(0) has three main subunits: a(1), b(2) and c(10-14). The alpha and beta chains form an alternating ring which encloses part of the gamma chain. F(1) is attached to F(0) by a central stalk formed by the gamma and epsilon chains, while a peripheral stalk is formed by the delta and b chains.

It localises to the cell inner membrane. In terms of biological role, f(1)F(0) ATP synthase produces ATP from ADP in the presence of a proton or sodium gradient. F-type ATPases consist of two structural domains, F(1) containing the extramembraneous catalytic core and F(0) containing the membrane proton channel, linked together by a central stalk and a peripheral stalk. During catalysis, ATP synthesis in the catalytic domain of F(1) is coupled via a rotary mechanism of the central stalk subunits to proton translocation. Its function is as follows. Component of the F(0) channel, it forms part of the peripheral stalk, linking F(1) to F(0). The protein is ATP synthase subunit b of Blochmanniella pennsylvanica (strain BPEN).